The primary structure comprises 799 residues: Protein translocase subunit SecA (799 aa).

ATP is bound by residues glutamine 85, 103–107 (GEGKT), and aspartate 504.

This sequence belongs to the SecA family. Monomer and homodimer. Part of the essential Sec protein translocation apparatus which comprises SecA, SecYEG and auxiliary proteins SecDF. Other proteins may also be involved.

Its subcellular location is the cell membrane. The protein localises to the cytoplasm. It catalyses the reaction ATP + H2O + cellular proteinSide 1 = ADP + phosphate + cellular proteinSide 2.. Functionally, part of the Sec protein translocase complex. Interacts with the SecYEG preprotein conducting channel. Has a central role in coupling the hydrolysis of ATP to the transfer of proteins into and across the cell membrane, serving as an ATP-driven molecular motor driving the stepwise translocation of polypeptide chains across the membrane. This is Protein translocase subunit SecA from Lactobacillus gasseri (strain ATCC 33323 / DSM 20243 / BCRC 14619 / CIP 102991 / JCM 1131 / KCTC 3163 / NCIMB 11718 / NCTC 13722 / AM63).